Here is a 717-residue protein sequence, read N- to C-terminus: Polyribonucleotide nucleotidyltransferase (717 aa).

2 residues coordinate Mg(2+): Asp-488 and Asp-494. The 60-residue stretch at 555–614 (PRIEVMNIPVDKIREVIGSGGKVIREIVEKTGAKINIEDDGTVKIASSSGKEIEAARKWI) folds into the KH domain. The region spanning 624–692 (GQIYEGTVVK…ERGKVRLSMK (69 aa)) is the S1 motif domain.

This sequence belongs to the polyribonucleotide nucleotidyltransferase family. Mg(2+) is required as a cofactor.

It is found in the cytoplasm. The catalysed reaction is RNA(n+1) + phosphate = RNA(n) + a ribonucleoside 5'-diphosphate. In terms of biological role, involved in mRNA degradation. Catalyzes the phosphorolysis of single-stranded polyribonucleotides processively in the 3'- to 5'-direction. The polypeptide is Polyribonucleotide nucleotidyltransferase (Sinorhizobium fredii (strain NBRC 101917 / NGR234)).